Here is a 449-residue protein sequence, read N- to C-terminus: UDP-N-acetylmuramoylalanine--D-glutamate ligase (449 aa).

118–124 (GSNGKTT) is a binding site for ATP.

This sequence belongs to the MurCDEF family.

The protein localises to the cytoplasm. It carries out the reaction UDP-N-acetyl-alpha-D-muramoyl-L-alanine + D-glutamate + ATP = UDP-N-acetyl-alpha-D-muramoyl-L-alanyl-D-glutamate + ADP + phosphate + H(+). It functions in the pathway cell wall biogenesis; peptidoglycan biosynthesis. In terms of biological role, cell wall formation. Catalyzes the addition of glutamate to the nucleotide precursor UDP-N-acetylmuramoyl-L-alanine (UMA). The chain is UDP-N-acetylmuramoylalanine--D-glutamate ligase from Leuconostoc citreum (strain KM20).